Here is a 252-residue protein sequence, read N- to C-terminus: Imidazole glycerol phosphate synthase subunit HisF (252 aa).

Active-site residues include D11 and D130.

This sequence belongs to the HisA/HisF family. As to quaternary structure, heterodimer of HisH and HisF.

It localises to the cytoplasm. It catalyses the reaction 5-[(5-phospho-1-deoxy-D-ribulos-1-ylimino)methylamino]-1-(5-phospho-beta-D-ribosyl)imidazole-4-carboxamide + L-glutamine = D-erythro-1-(imidazol-4-yl)glycerol 3-phosphate + 5-amino-1-(5-phospho-beta-D-ribosyl)imidazole-4-carboxamide + L-glutamate + H(+). It participates in amino-acid biosynthesis; L-histidine biosynthesis; L-histidine from 5-phospho-alpha-D-ribose 1-diphosphate: step 5/9. In terms of biological role, IGPS catalyzes the conversion of PRFAR and glutamine to IGP, AICAR and glutamate. The HisF subunit catalyzes the cyclization activity that produces IGP and AICAR from PRFAR using the ammonia provided by the HisH subunit. This is Imidazole glycerol phosphate synthase subunit HisF from Petrotoga mobilis (strain DSM 10674 / SJ95).